The chain runs to 103 residues: Large ribosomal subunit protein bL21 (103 aa).

This sequence belongs to the bacterial ribosomal protein bL21 family. In terms of assembly, part of the 50S ribosomal subunit. Contacts protein L20.

This protein binds to 23S rRNA in the presence of protein L20. In Desulforudis audaxviator (strain MP104C), this protein is Large ribosomal subunit protein bL21.